Here is a 183-residue protein sequence, read N- to C-terminus: Inosine/xanthosine triphosphatase (183 aa).

Asp-75 is a Mg(2+) binding site. A substrate-binding site is contributed by 75 to 76; the sequence is DG.

The protein belongs to the YjjX NTPase family. As to quaternary structure, homodimer. Mg(2+) is required as a cofactor. It depends on Mn(2+) as a cofactor.

It carries out the reaction XTP + H2O = XDP + phosphate + H(+). It catalyses the reaction ITP + H2O = IDP + phosphate + H(+). Its function is as follows. Phosphatase that hydrolyzes non-canonical purine nucleotides such as XTP and ITP to their respective diphosphate derivatives. Probably excludes non-canonical purines from DNA/RNA precursor pool, thus preventing their incorporation into DNA/RNA and avoiding chromosomal lesions. This Vibrio vulnificus (strain CMCP6) protein is Inosine/xanthosine triphosphatase.